The following is a 233-amino-acid chain: MSTQLQSVIAVVPAAGVGSRMKADRPKQYLKINGKTILEHTIEKLLSHPQVSQIVVAISDDDPYYPELALNQNPKVVRVSGGSERADSVLSALNCIAEQQLSDWVMVHDAARPCVQLSDIDKLISGAMSHDVGAILAAPVRDTMKRGAQGQIEHTVERADLWHALTPQMFRAKPLWNALSEALQQGVSITDEASAFEWKGLSPALVAGRSDNFKITQPEDLALAEFYLSQNKE.

Belongs to the IspD/TarI cytidylyltransferase family. IspD subfamily.

The catalysed reaction is 2-C-methyl-D-erythritol 4-phosphate + CTP + H(+) = 4-CDP-2-C-methyl-D-erythritol + diphosphate. The protein operates within isoprenoid biosynthesis; isopentenyl diphosphate biosynthesis via DXP pathway; isopentenyl diphosphate from 1-deoxy-D-xylulose 5-phosphate: step 2/6. Functionally, catalyzes the formation of 4-diphosphocytidyl-2-C-methyl-D-erythritol from CTP and 2-C-methyl-D-erythritol 4-phosphate (MEP). The protein is 2-C-methyl-D-erythritol 4-phosphate cytidylyltransferase of Vibrio atlanticus (strain LGP32) (Vibrio splendidus (strain Mel32)).